The sequence spans 276 residues: Probable endonuclease 4 (276 aa).

Residues H65, H105, E141, D175, H178, H210, D223, H225, and E255 each contribute to the Zn(2+) site.

This sequence belongs to the AP endonuclease 2 family. It depends on Zn(2+) as a cofactor.

It carries out the reaction Endonucleolytic cleavage to 5'-phosphooligonucleotide end-products.. Its function is as follows. Endonuclease IV plays a role in DNA repair. It cleaves phosphodiester bonds at apurinic or apyrimidinic (AP) sites, generating a 3'-hydroxyl group and a 5'-terminal sugar phosphate. This Symbiobacterium thermophilum (strain DSM 24528 / JCM 14929 / IAM 14863 / T) protein is Probable endonuclease 4.